We begin with the raw amino-acid sequence, 320 residues long: tRNA uridine(34) hydroxylase (320 aa).

The Rhodanese domain occupies 123 to 217 (EDENTVILDA…YGKDPETKGL (95 aa)). The active-site Cysteine persulfide intermediate is C177.

The protein belongs to the TrhO family.

It catalyses the reaction uridine(34) in tRNA + AH2 + O2 = 5-hydroxyuridine(34) in tRNA + A + H2O. Catalyzes oxygen-dependent 5-hydroxyuridine (ho5U) modification at position 34 in tRNAs. The polypeptide is tRNA uridine(34) hydroxylase (Staphylococcus epidermidis (strain ATCC 35984 / DSM 28319 / BCRC 17069 / CCUG 31568 / BM 3577 / RP62A)).